The primary structure comprises 493 residues: Monocarboxylate transporter 1 (493 aa).

Topologically, residues Met1–Val22 are cytoplasmic. A helical transmembrane segment spans residues Leu23–Phe44. Lys38 lines the (S)-lactate pocket. The Extracellular segment spans residues Lys45–Thr55. Residues Ser56–Val80 traverse the membrane as a helical segment. At Asn81–Gly84 the chain is on the cytoplasmic side. Residues Ser85 to Phe105 form a helical membrane-spanning segment. Residues Cys106 to Val109 lie on the Extracellular side of the membrane. A helical membrane pass occupies residues Gln110–Leu132. The Cytoplasmic portion of the chain corresponds to Thr133–Ala146. Residues Asn147–Phe169 form a helical membrane-spanning segment. The Extracellular segment spans residues Asp170–Trp174. Residues Arg175 to Leu194 traverse the membrane as a helical segment. Residues Met195 to Arg254 are Cytoplasmic-facing. 3 positions are modified to phosphoserine: Ser210, Ser213, and Ser220. At Thr224 the chain carries Phosphothreonine. Ser230 is subject to Phosphoserine. Residues Gly255 to Gly281 form a helical membrane-spanning segment. Residues Lys282–Ser288 lie on the Extracellular side of the membrane. The chain crosses the membrane as a helical span at residues Glu289–Gly310. Asp302 is a binding site for H(+). Position 306 (Arg306) interacts with (S)-lactate. Over Leu311 to Arg321 the chain is Cytoplasmic. A helical membrane pass occupies residues Ile322 to Leu342. The Extracellular portion of the chain corresponds to Ser343–Tyr346. The helical transmembrane segment at Val347–Phe368 threads the bilayer. Residues Glu369–Ser382 lie on the Cytoplasmic side of the membrane. A helical membrane pass occupies residues Ala383 to Gly403. Topologically, residues Arg404 to Tyr414 are extracellular. The helical transmembrane segment at Thr415 to Ile436 threads the bilayer. Residues Asn437 to Val493 are Cytoplasmic-facing. A compositionally biased stretch (basic and acidic residues) spans Ala447–Met472. Positions Ala447–Val493 are disordered. Ser461 is modified (phosphoserine). Thr462 is subject to Phosphothreonine. Residues Ala474 to Asp485 show a composition bias toward polar residues. 4 positions are modified to phosphoserine: Ser477, Ser482, Ser483, and Ser491.

This sequence belongs to the major facilitator superfamily. Monocarboxylate porter (TC 2.A.1.13) family. Interacts with isoform 2 of BSG; interaction mediates SLC16A1 targeting to the plasma membrane. Interacts with EMB; interaction mediates SLC16A1 targeting to the plasma membrane. In terms of tissue distribution, detected in liver, brain, spinal cord, spermatozoa, muscle, white adipose tissue and brown adipose tissue (at protein level). Widely expressed, except in pancreas, where expression is not detectable.

The protein resides in the cell membrane. The protein localises to the basolateral cell membrane. It localises to the apical cell membrane. It carries out the reaction (S)-lactate(in) + H(+)(in) = (S)-lactate(out) + H(+)(out). The enzyme catalyses acetate(out) + H(+)(out) = acetate(in) + H(+)(in). It catalyses the reaction acetoacetate(out) + H(+)(out) = acetoacetate(in) + H(+)(in). The catalysed reaction is pyruvate(out) + H(+)(out) = pyruvate(in) + H(+)(in). It carries out the reaction (R)-3-hydroxybutanoate(out) + H(+)(out) = (R)-3-hydroxybutanoate(in) + H(+)(in). The enzyme catalyses 3-methyl-2-oxobutanoate(out) + H(+)(out) = 3-methyl-2-oxobutanoate(in) + H(+)(in). It catalyses the reaction 4-methyl-2-oxopentanoate(out) + H(+)(out) = 4-methyl-2-oxopentanoate(in) + H(+)(in). The catalysed reaction is succinate(in) + 2 H(+)(in) = succinate(out) + 2 H(+)(out). In terms of biological role, bidirectional proton-coupled monocarboxylate transporter. Catalyzes the rapid transport across the plasma membrane of many monocarboxylates such as lactate, pyruvate, acetate and the ketone bodies acetoacetate and beta-hydroxybutyrate, and thus contributes to the maintenance of intracellular pH. The transport direction is determined by the proton motive force and the concentration gradient of the substrate monocarboxylate. MCT1 is a major lactate exporter. Plays a role in cellular responses to a high-fat diet by modulating the cellular levels of lactate and pyruvate that contribute to the regulation of central metabolic pathways and insulin secretion, with concomitant effects on plasma insulin levels and blood glucose homeostasis. Facilitates the protonated monocarboxylate form of succinate export, that its transient protonation upon muscle cell acidification in exercising muscle and ischemic heart. Functions via alternate outward- and inward-open conformation states. Protonation and deprotonation of 302-Asp is essential for the conformational transition. This Mus musculus (Mouse) protein is Monocarboxylate transporter 1 (Slc16a1).